We begin with the raw amino-acid sequence, 138 residues long: Gas vesicle protein A (138 aa).

The tract at residues 74 to 138 (EAGPRKDPGL…STSRKKEEQE (65 aa)) is disordered. Over residues 116 to 129 (GSSSGSSSGSSSRS) the composition is skewed to low complexity.

It belongs to the gas vesicle GvpA family. In terms of assembly, the gas vesicle shell is 2 nm thick and consists of a single layer of this protein. It forms helical ribs nearly perpendicular to the long axis of the vesicle.

The protein resides in the gas vesicle shell. Functionally, gas vesicles are hollow, gas filled proteinaceous nanostructures found in some microorganisms. During planktonic growth they allow positioning of the organism at a favorable depth for light or nutrient acquisition. GvpA forms the protein shell. It is not clear what function gas vesicles perform in soil bacteria. The chain is Gas vesicle protein A from Streptomyces sp. (strain CB03234).